A 349-amino-acid chain; its full sequence is Prostaglandin reductase 1 (349 aa).

T18 carries the phosphothreonine modification. S20 is subject to Phosphoserine. NADP(+) contacts are provided by residues 152–155 (GAVG), K178, Y193, N217, 239–245 (CGAISMY), 270–272 (FIF), and N321. Residue K178 is modified to N6-(2-hydroxyisobutyryl)lysine; alternate. K178 carries the N6-acetyllysine; alternate modification.

The protein belongs to the NADP-dependent oxidoreductase L4BD family. In terms of assembly, monomer or homodimer.

It localises to the cytoplasm. It carries out the reaction 13,14-dihydro-15-oxo-prostaglandin E1 + NADP(+) = 15-oxoprostaglandin E1 + NADPH + H(+). The catalysed reaction is 13,14-dihydro-15-oxo-prostaglandin E2 + NADP(+) = 15-oxoprostaglandin E2 + NADPH + H(+). It catalyses the reaction 13,14-dihydro-15-oxo-prostaglandin F1alpha + NADP(+) = 15-oxoprostaglandin F1alpha + NADPH + H(+). The enzyme catalyses 13,14-dihydro-15-oxo-PGF2alpha + NADP(+) = 15-oxoprostaglandin F2alpha + NADPH + H(+). It carries out the reaction leukotriene B4 + NADP(+) = 12-oxo-leukotriene B4 + NADPH + H(+). The catalysed reaction is 20-hydroxy-leukotriene B4 + NADP(+) = 12-oxo-20-hydroxy-leukotriene B4 + NADPH + H(+). It catalyses the reaction 6-trans-leukotriene B4 + NADP(+) = 12-oxo-(5S)-hydroxy-(6E,8E,10E,14Z)-eicosatetraenoate + NADPH + H(+). The enzyme catalyses (5S,12S)-dihydroxy-(6E,10E,12E,14Z)-eicosatetraenoate + NADP(+) = 12-oxo-(5S)-hydroxy-(6E,8E,10E,14Z)-eicosatetraenoate + NADPH + H(+). It carries out the reaction an n-alkanal + NADP(+) = an alk-2-enal + NADPH + H(+). The catalysed reaction is hexanal + NADP(+) = (E)-hex-2-enal + NADPH + H(+). It catalyses the reaction octanal + NADP(+) = (2E)-octenal + NADPH + H(+). The enzyme catalyses decanal + NADP(+) = (2E)-decenal + NADPH + H(+). It carries out the reaction dodecanal + NADP(+) = (2E)-dodecenal + NADPH + H(+). The catalysed reaction is 4-hydroxynonanal + NADP(+) = (E)-4-hydroxynon-2-enal + NADPH + H(+). It catalyses the reaction pentan-2-one + NADP(+) = (E)-pent-3-en-2-one + NADPH + H(+). The enzyme catalyses nonan-2-one + NADP(+) = (3E)-nonen-2-one + NADPH + H(+). NAD(P)H-dependent oxidoreductase involved in metabolic inactivation of pro- and anti-inflammatory eicosanoids: prostaglandins (PG), leukotrienes (LT) and lipoxins (LX). Catalyzes with high efficiency the reduction of the 13,14 double bond of 15-oxoPGs, including 15-oxo-PGE1, 15-oxo-PGE2, 15-oxo-PGF1-alpha and 15-oxo-PGF2-alpha. Catalyzes with lower efficiency the oxidation of the hydroxyl group at C12 of LTB4 and its derivatives, converting them into biologically less active 12-oxo-LTB4 metabolites. Reduces 15-oxo-LXA4 to 13,14 dihydro-15-oxo-LXA4, enhancing neutrophil recruitment at the inflammatory site. Plays a role in metabolic detoxification of alkenals and ketones. Reduces alpha,beta-unsaturated alkenals and ketones, particularly those with medium-chain length, showing highest affinity toward (2E)-decenal and (3E)-3-nonen-2-one. May inactivate 4-hydroxy-2-nonenal, a cytotoxic lipid constituent of oxidized low-density lipoprotein particles. The chain is Prostaglandin reductase 1 (PTGR1) from Oryctolagus cuniculus (Rabbit).